A 150-amino-acid chain; its full sequence is Large ribosomal subunit protein uL23 (150 aa).

Residues 1–24 (MNKENKTQAVNKAKNTAKVAKKGS) are disordered. Positions 7 to 18 (TQAVNKAKNTAK) are enriched in low complexity.

Belongs to the universal ribosomal protein uL23 family.

The polypeptide is Large ribosomal subunit protein uL23 (RPL23A) (Tetrahymena thermophila (strain SB210)).